The chain runs to 207 residues: BON1-associated protein 2 (207 aa).

Residues 1-112 (MSYSTFKRSL…GFAPQGHLNF (112 aa)) form the C2 domain.

Interacts with BON1, BON2 and BON3. As to expression, expressed in roots, leaves, stems and flowers.

The protein localises to the membrane. Its function is as follows. Negative regulator of cell death and defense responses. Exhibits calcium-dependent phospholipid binding properties. This Arabidopsis thaliana (Mouse-ear cress) protein is BON1-associated protein 2 (BAP2).